We begin with the raw amino-acid sequence, 442 residues long: O-acetyl-L-homoserine sulfhydrylase (442 aa).

A disordered region spans residues 1–32 (MVGPSGESMPRNFKPETIALHGGQEPDPTTTS). N6-(pyridoxal phosphate)lysine is present on Lys-216.

It belongs to the trans-sulfuration enzymes family. Pyridoxal 5'-phosphate serves as cofactor.

The enzyme catalyses O-acetyl-L-homoserine + hydrogen sulfide = L-homocysteine + acetate. Its pathway is amino-acid biosynthesis; L-methionine biosynthesis via de novo pathway; L-homocysteine from O-acetyl-L-homoserine: step 1/1. With respect to regulation, feedback inhibited at very high concentrations of methionine or S-adenosylmethionine. In terms of biological role, catalyzes the conversion of O-acetyl-L-homoserine (OAH) into homocysteine in the methionine biosynthesis pathway. Can also use O-succinyl-homoserine (OSH), although at low efficiency. In Leptospira meyeri, this protein is O-acetyl-L-homoserine sulfhydrylase.